Reading from the N-terminus, the 269-residue chain is Tryptophan synthase alpha chain (269 aa).

Residues Glu50 and Asp61 each act as proton acceptor in the active site.

It belongs to the TrpA family. Tetramer of two alpha and two beta chains.

The enzyme catalyses (1S,2R)-1-C-(indol-3-yl)glycerol 3-phosphate + L-serine = D-glyceraldehyde 3-phosphate + L-tryptophan + H2O. The protein operates within amino-acid biosynthesis; L-tryptophan biosynthesis; L-tryptophan from chorismate: step 5/5. Functionally, the alpha subunit is responsible for the aldol cleavage of indoleglycerol phosphate to indole and glyceraldehyde 3-phosphate. The protein is Tryptophan synthase alpha chain of Buchnera aphidicola subsp. Baizongia pistaciae (strain Bp).